A 330-amino-acid chain; its full sequence is Aspartate--ammonia ligase (330 aa).

This sequence belongs to the class-II aminoacyl-tRNA synthetase family. AsnA subfamily.

The protein localises to the cytoplasm. The catalysed reaction is L-aspartate + NH4(+) + ATP = L-asparagine + AMP + diphosphate + H(+). It participates in amino-acid biosynthesis; L-asparagine biosynthesis; L-asparagine from L-aspartate (ammonia route): step 1/1. In Haemophilus influenzae (strain PittEE), this protein is Aspartate--ammonia ligase.